The chain runs to 174 residues: Beta-lactoglobulin (174 aa).

An N-terminal signal peptide occupies residues methionine 1–alanine 18. 2 disulfide bridges follow: cysteine 79–cysteine 172 and cysteine 122–cysteine 134.

The protein belongs to the calycin superfamily. Lipocalin family. As to quaternary structure, monomer.

The protein resides in the secreted. Its function is as follows. Lactoglobulin is the primary component of whey, it binds retinol and is probably involved in the transport of that molecule. The protein is Beta-lactoglobulin (LGB) of Trichosurus vulpecula (Brush-tailed possum).